We begin with the raw amino-acid sequence, 160 residues long: Serine-protein kinase RsbW (160 aa).

It belongs to the anti-sigma-factor family.

The enzyme catalyses L-seryl-[protein] + ATP = O-phospho-L-seryl-[protein] + ADP + H(+). It catalyses the reaction L-threonyl-[protein] + ATP = O-phospho-L-threonyl-[protein] + ADP + H(+). In terms of biological role, negative regulator of sigma-B activity. Phosphorylates and inactivates its specific antagonist protein, RsbV. Upon phosphorylation of RsbV, RsbW is released and binds to sigma-B, thereby blocking its ability to form an RNA polymerase holoenzyme (E-sigma-B). This Bacillus cereus (strain G9842) protein is Serine-protein kinase RsbW.